Here is a 775-residue protein sequence, read N- to C-terminus: Transposon TX1 uncharacterized 82 kDa protein (775 aa).

Positions 1–10 (MGGNKKESYK) are enriched in basic and acidic residues. 3 disordered regions span residues 1 to 46 (MGGN…ASTS), 256 to 277 (PKGQ…KTSY), and 535 to 565 (PIQD…TSTV). The segment covering 35 to 46 (EPMSKSPIASTS) has biased composition (polar residues). The span at 539-549 (PADKTAGKDGE) shows a compositional bias: basic and acidic residues.

This Xenopus laevis (African clawed frog) protein is Transposon TX1 uncharacterized 82 kDa protein.